Consider the following 302-residue polypeptide: RNA polymerase II holoenzyme cyclin-like subunit (302 aa).

Positions 53–142 (QQLIKLGKRM…LGECEFSLIS (90 aa)) constitute a Cyclin N-terminal domain.

Belongs to the cyclin family. Cyclin C subfamily. Component of the srb8-11 complex, a regulatory module of the Mediator complex.

The protein resides in the nucleus. Component of the srb8-11 complex. The srb8-11 complex is a regulatory module of the Mediator complex which is itself involved in regulation of basal and activated RNA polymerase II-dependent transcription. The srb8-11 complex may be involved in the transcriptional repression of a subset of genes regulated by Mediator. It may inhibit the association of the Mediator complex with RNA polymerase II to form the holoenzyme complex. The srb8-11 complex phosphorylates the C-terminal domain (CTD) of the largest subunit of RNA polymerase II. This Aspergillus clavatus (strain ATCC 1007 / CBS 513.65 / DSM 816 / NCTC 3887 / NRRL 1 / QM 1276 / 107) protein is RNA polymerase II holoenzyme cyclin-like subunit (ssn8).